The following is a 101-amino-acid chain: Urease subunit beta (101 aa).

It belongs to the urease beta subunit family. Heterotrimer of UreA (gamma), UreB (beta) and UreC (alpha) subunits. Three heterotrimers associate to form the active enzyme.

Its subcellular location is the cytoplasm. The catalysed reaction is urea + 2 H2O + H(+) = hydrogencarbonate + 2 NH4(+). It functions in the pathway nitrogen metabolism; urea degradation; CO(2) and NH(3) from urea (urease route): step 1/1. This Leptothrix cholodnii (strain ATCC 51168 / LMG 8142 / SP-6) (Leptothrix discophora (strain SP-6)) protein is Urease subunit beta.